A 110-amino-acid polypeptide reads, in one-letter code: UPF0122 protein Aflv_1766 (110 aa).

This sequence belongs to the UPF0122 family.

Its function is as follows. Might take part in the signal recognition particle (SRP) pathway. This is inferred from the conservation of its genetic proximity to ftsY/ffh. May be a regulatory protein. This Anoxybacillus flavithermus (strain DSM 21510 / WK1) protein is UPF0122 protein Aflv_1766.